Consider the following 651-residue polypeptide: Tudor domain-containing protein 3 (651 aa).

Residues 193–233 form the UBA domain; it reads LVDEKALKHITEMGFSKEASRQALMDNGNNLEAALNVLLTS. 3 disordered regions span residues 234–271, 287–369, and 381–450; these read NKQK…SAPS, EEPK…VSEV, and YSRY…TSIP. Ser-256 carries the phosphoserine modification. Polar residues predominate over residues 291–312; sequence SQPQQLHQGQYRSSNTEQNGVK. The segment covering 313–338 has biased composition (basic and acidic residues); the sequence is DNNHLRHPPRNDTRQPRNEKPPRFQR. Position 345 is a phosphoserine (Ser-345). Residue Lys-470 forms a Glycyl lysine isopeptide (Lys-Gly) (interchain with G-Cter in SUMO2) linkage. A Tudor domain is found at 555–615; that stretch reads MWKPGDECFA…KPIQTEAWEE (61 aa). Residues 624–633 are compositionally biased toward basic and acidic residues; the sequence is EFRRGGDGQP. Positions 624–651 are disordered; that stretch reads EFRRGGDGQPRRSTRPTQQFYQPPRARN. The segment at 631–651 is EBM motif; may mediate interaction with the EJC; the sequence is GQPRRSTRPTQQFYQPPRARN.

As to quaternary structure, component of mRNA stress granules. Interacts with FMR1, FXR1, FXR2, EWSR1, FUS, SERBP1, EEF1A1 and DDX3X or DDX3Y, and with the small nuclear ribonucleoprotein-associated proteins SNRPB and SNRPN. Interacts with 'Lys-48'-linked tetra-ubiquitin, but not with monoubiquitin or 'Lys-63'-linked ubiquitin chains. May interact with the exon junction complex (EJC) composed at least of CASC3, EIF4A3, MAGOH and RBM8A. Interacts with POLR2A (via the C-terminal domain (CTD)). Post-translationally, probably cleaved by enteroviral 2A proteinase. As to expression, detected in heart, brain, placenta, lung, liver, skeletal muscle, kidney and pancreas.

The protein localises to the cytoplasm. Its subcellular location is the nucleus. Functionally, scaffolding protein that specifically recognizes and binds dimethylarginine-containing proteins. Plays a role in the regulation of translation of target mRNAs by binding Arg/Gly-rich motifs (GAR) in dimethylarginine-containing proteins. In nucleus, acts as a coactivator: recognizes and binds asymmetric dimethylation on the core histone tails associated with transcriptional activation (H3R17me2a and H4R3me2a) and recruits proteins at these arginine-methylated loci. In cytoplasm, acts as an antiviral factor that participates in the assembly of stress granules together with G3BP1. This chain is Tudor domain-containing protein 3 (TDRD3), found in Homo sapiens (Human).